The sequence spans 946 residues: Leucine--tRNA ligase (946 aa).

The 'HIGH' region signature appears at 43 to 53 (PYPNGTIHIGH). Positions 638-642 (KMSKS) match the 'KMSKS' region motif. K641 contributes to the ATP binding site.

This sequence belongs to the class-I aminoacyl-tRNA synthetase family.

It is found in the cytoplasm. It carries out the reaction tRNA(Leu) + L-leucine + ATP = L-leucyl-tRNA(Leu) + AMP + diphosphate. The sequence is that of Leucine--tRNA ligase from Pyrobaculum calidifontis (strain DSM 21063 / JCM 11548 / VA1).